Consider the following 899-residue polypeptide: Tuberous sclerosis 1 protein homolog (899 aa).

Coiled coils occupy residues 540 to 706 (LSST…CVNI) and 737 to 847 (SDEQ…ELKN). The segment at 874–899 (NDSLHPKVGPPRRQSTDTSRSTFRQY) is disordered. A compositionally biased stretch (polar residues) spans 889–899 (TDTSRSTFRQY).

As to quaternary structure, interacts with tsc2.

Its subcellular location is the cytoplasm. Its function is as follows. Together with tsc2, required for uptake of various amino acids from the environment and for proper conjugation. Involved in induction of gene expression of permeases and genes required for meiosis upon nitrogen starvation. May act as a GTPase-activating protein (GAP) for the small GTPase rhb1. This is Tuberous sclerosis 1 protein homolog (tsc1) from Schizosaccharomyces pombe (strain 972 / ATCC 24843) (Fission yeast).